Consider the following 26-residue polypeptide: uncharacterized protein (26 aa).

The protein belongs to the asfivirus E66L family.

This is an uncharacterized protein from Ornithodoros (relapsing fever ticks).